Reading from the N-terminus, the 947-residue chain is MSLPSRQTAIIVNPPPPEYINTKKNGRLTNQLQYLQKVVLKDLWKHSFSWPFQRPVDAVKLKLPDYYTIIKNPMDLNTIKKRLENKYYVKASECIEDFNTMFSNCYLYNKPGDDIVLMAQALEKLFVQKLSQMPQEEQVVGGKERIKKGTQQNIAVFSAKEKSSPNATEKVFKQQAIPSVFPKTSVSPLNVAQGASVNSSSQSVAQVTKGVKRKADTTTPATSVVKASSEFSPTFTEKSVTLPPIKENMPKNVLPDSQQQYNVVKSVKVTEQLRHCSEILKEMLAKKHFSYAWPFYNPVDVNALGLHNYYDIVKNPMDLGTIKEKMDNQEYKDAYKFAADVRLMFMNCYKYNPPDHEVVTMARMLQDVFETHFSKIPVEPVESMPLCYIKTDITETTGRENTNEASSEGNSSGDSEDERVQRLAKLQEQLKAVHQQLQVLSQVPFRKLNKKKEKSKKEKKKEKVNNSNENPRKMCEQMRLKEKSKRNQPKKRKQQYIGQKSEDEDNAKPMNYDEKRQLSLNINKLPGDKLGRVVHIIQSREPSLSNSNPDEIEIDFETLKASTLRELEKYVSACLRKRPLKPPAKKIMMSKEELHSQKKQELEKRLLDVNNQLNSRKRQTKSEKTQPSKAVGSVSRLSESSSSSSSSSESESSSSDLSSSDSSGSESEMFPKFTEVKPNDSPSKENVKKMKNECILPEGRIGITQIECSVQDKTSANTTLVHQTTPSHVMPPNHHQLAFNYQELEHLQTVKNISPLQILPPSGDSEQLSNGITVMHPSGDNATTMLESECQAPVQKDIKIKNADSWKSLGKSVKPSGVMKSSDELFNQFRKAAIEKEVKARTQELIRKHLEQNTKEPKVSQENQRDLGNGLTVESFSNKIQNKCSGEEQKEHQQSLEAQDKSKLWLLKDRNLAREKEQERRRREAMAGTIDMTLQSDIMTMFENNFD.

The Bromo 1 domain occupies 27–133 (RLTNQLQYLQ…KLFVQKLSQM (107 aa)). A Phosphoserine modification is found at S187. Residues 209 to 220 (KGVKRKADTTTP) carry the Nuclear localization signal motif. Residues 267–376 (VKVTEQLRHC…DVFETHFSKI (110 aa)) enclose the Bromo 2 domain. Disordered regions lie at residues 395-421 (ETTG…ERVQ), 444-512 (PFRK…PMNY), 610-690 (NNQL…VKKM), and 849-873 (HLEQ…GLTV). The span at 403 to 413 (NEASSEGNSSG) shows a compositional bias: low complexity. Residues 417-470 (DERVQRLAKLQEQLKAVHQQLQVLSQVPFRKLNKKKEKSKKEKKKEKVNNSNEN) are a coiled coil. Over residues 447-462 (KLNKKKEKSKKEKKKE) the composition is skewed to basic residues. The segment covering 470-481 (NPRKMCEQMRLK) has biased composition (basic and acidic residues). The segment covering 482–494 (EKSKRNQPKKRKQ) has biased composition (basic residues). The region spanning 500-582 (KSEDEDNAKP…ACLRKRPLKP (83 aa)) is the NET domain. A compositionally biased stretch (low complexity) spans 631–668 (VGSVSRLSESSSSSSSSSESESSSSDLSSSDSSGSESE). 2 stretches are compositionally biased toward basic and acidic residues: residues 674-690 (TEVK…VKKM) and 849-865 (HLEQ…ENQR).

The protein belongs to the BET family. Interacts with SMARCE1. Interacts with mRNA splicing machinery proteins SRSF2, DDX5, HNRNPK and TARDBP. Interacts with the acetylated N-terminus of histone H1, H2, H3 and H4. Interacts with P-TEFb components CDK9 and CCNT1/cyclin-T1. Ubiquitinated in a SPOP-dependent manner, leading to proteasomal degradation.

It localises to the nucleus. In terms of biological role, testis-specific chromatin protein that specifically binds histone H4 acetylated at 'Lys-5' and 'Lys-8' (H4K5ac and H4K8ac, respectively) and plays a key role in spermatogenesis. Required in late pachytene spermatocytes: plays a role in meiotic and post-meiotic cells by binding to acetylated histones at the promoter of specific meiotic and post-meiotic genes, facilitating their activation at the appropriate time. In the post-meiotic phase of spermatogenesis, binds to hyperacetylated histones and participates in their general removal from DNA. Also recognizes and binds a subset of butyrylated histones: able to bind histone H4 butyrylated at 'Lys-8' (H4K8ac), while it is not able to bind H4 butyrylated at 'Lys-5' (H4K5ac). Also acts as a component of the splicing machinery in pachytene spermatocytes and round spermatids and participates in 3'-UTR truncation of specific mRNAs in post-meiotic spermatids. Required for chromocenter organization, a structure comprised of peri-centromeric heterochromatin. The sequence is that of Bromodomain testis-specific protein (BRDT) from Macaca fascicularis (Crab-eating macaque).